The primary structure comprises 209 residues: Urease accessory protein UreG (209 aa).

11-18 (GPVGSGKT) is a GTP binding site.

This sequence belongs to the SIMIBI class G3E GTPase family. UreG subfamily. In terms of assembly, homodimer. UreD, UreF and UreG form a complex that acts as a GTP-hydrolysis-dependent molecular chaperone, activating the urease apoprotein by helping to assemble the nickel containing metallocenter of UreC. The UreE protein probably delivers the nickel.

It is found in the cytoplasm. Facilitates the functional incorporation of the urease nickel metallocenter. This process requires GTP hydrolysis, probably effectuated by UreG. This Edwardsiella ictaluri (strain 93-146) protein is Urease accessory protein UreG.